The sequence spans 800 residues: Serine/threonine-protein kinase KIN4 (800 aa).

The Protein kinase domain maps to 46–313 (YIIGSTLGEG…LQTIKRHVWL (268 aa)). ATP is bound by residues 52–60 (LGEGEFGKV) and K80. The active-site Proton acceptor is D175. 2 disordered regions span residues 331–397 (LQKE…GSKV) and 438–487 (SARH…TSFT). Low complexity predominate over residues 348–358 (STYSSSASSYS). Residues S365 and S388 each carry the phosphoserine modification. 2 stretches are compositionally biased toward polar residues: residues 380-395 (QLAT…STGS) and 459-473 (GSPT…PSSK). Phosphoserine is present on S521. Disordered regions lie at residues 629-661 (EPTN…DKDS) and 678-754 (SLNG…PGRS). The segment covering 678–721 (SLNGSRSTVESRTSKGNAPPVSSRNPSGQSNRSNIKITQQQPRN) has biased composition (polar residues). Over residues 727–740 (PNPDKKINDNRIRD) the composition is skewed to basic and acidic residues. Residue S748 is modified to Phosphoserine.

It belongs to the protein kinase superfamily. Ser/Thr protein kinase family.

The catalysed reaction is L-seryl-[protein] + ATP = O-phospho-L-seryl-[protein] + ADP + H(+). The enzyme catalyses L-threonyl-[protein] + ATP = O-phospho-L-threonyl-[protein] + ADP + H(+). Its function is as follows. This protein is probably a serine/threonine protein kinase. The sequence is that of Serine/threonine-protein kinase KIN4 (KIN4) from Saccharomyces cerevisiae (strain ATCC 204508 / S288c) (Baker's yeast).